The following is a 121-amino-acid chain: Large ribosomal subunit protein bL19 (121 aa).

This sequence belongs to the bacterial ribosomal protein bL19 family.

Its function is as follows. This protein is located at the 30S-50S ribosomal subunit interface and may play a role in the structure and function of the aminoacyl-tRNA binding site. The protein is Large ribosomal subunit protein bL19 of Acidothermus cellulolyticus (strain ATCC 43068 / DSM 8971 / 11B).